A 162-amino-acid chain; its full sequence is Solute carrier family 2, facilitated glucose transporter member 4 (162 aa).

The Extracellular segment spans residues 1–13 (TSIFETAGVGQPA). A helical membrane pass occupies residues 14–34 (YATIGAGVVNTVFTLVSVFLV). Asn23 serves as a coordination point for D-glucose. The Cytoplasmic portion of the chain corresponds to 35–43 (ERAGRRTLH). The chain crosses the membrane as a helical span at residues 44-64 (LLGLAGMCGCAILMTIALLLL). The Extracellular portion of the chain corresponds to 65-75 (ERLPAMSYVSI). Residues 76–96 (VAIFGFVAFFEIGPGPIPWFI) traverse the membrane as a helical segment. D-glucose is bound by residues Glu86 and Trp94. Residues 97-107 (VAELFSQGPRP) lie on the Cytoplasmic side of the membrane. The helical transmembrane segment at 108–128 (AAMAVAGFCNWTSNFIIGMGF) threads the bilayer. The Extracellular portion of the chain corresponds to 129 to 135 (QYIAXAM). Residues 136–156 (GPYVFLLFAVLLLAFFIFTFL) traverse the membrane as a helical segment. At 157–162 (KVPETR) the chain is on the cytoplasmic side.

It belongs to the major facilitator superfamily. Sugar transporter (TC 2.A.1.1) family. Glucose transporter subfamily. As to quaternary structure, binds to DAXX. Interacts via its N-terminus with SRFBP1. Interacts with NDUFA9. Interacts with TRARG1; the interaction is required for proper SLC2A4 recycling after insulin stimulation. Post-translationally, sumoylated. Palmitoylated. Palmitoylation by ZDHHC7 controls the insulin-dependent translocation of GLUT4 to the plasma membrane.

Its subcellular location is the cell membrane. The protein localises to the endomembrane system. It is found in the cytoplasm. It localises to the perinuclear region. It carries out the reaction D-glucose(out) = D-glucose(in). Functionally, insulin-regulated facilitative glucose transporter, which plays a key role in removal of glucose from circulation. Response to insulin is regulated by its intracellular localization: in the absence of insulin, it is efficiently retained intracellularly within storage compartments in muscle and fat cells. Upon insulin stimulation, translocates from these compartments to the cell surface where it transports glucose from the extracellular milieu into the cell. This is Solute carrier family 2, facilitated glucose transporter member 4 from Canis lupus familiaris (Dog).